The sequence spans 277 residues: Putative phosphoenolpyruvate synthase regulatory protein (277 aa).

157–164 (GVSRCGKT) is an ADP binding site.

It belongs to the pyruvate, phosphate/water dikinase regulatory protein family. PSRP subfamily.

It catalyses the reaction [pyruvate, water dikinase] + ADP = [pyruvate, water dikinase]-phosphate + AMP + H(+). The catalysed reaction is [pyruvate, water dikinase]-phosphate + phosphate + H(+) = [pyruvate, water dikinase] + diphosphate. Functionally, bifunctional serine/threonine kinase and phosphorylase involved in the regulation of the phosphoenolpyruvate synthase (PEPS) by catalyzing its phosphorylation/dephosphorylation. The chain is Putative phosphoenolpyruvate synthase regulatory protein from Photobacterium profundum (strain SS9).